The chain runs to 628 residues: 1-deoxy-D-xylulose-5-phosphate synthase (628 aa).

Residues His-77 and 118–120 each bind thiamine diphosphate; that span reads GHS. Asp-150 serves as a coordination point for Mg(2+). Thiamine diphosphate-binding positions include 151–152, Asn-180, Tyr-288, and Glu-369; that span reads GA. Asn-180 is a Mg(2+) binding site.

This sequence belongs to the transketolase family. DXPS subfamily. As to quaternary structure, homodimer. Mg(2+) serves as cofactor. Requires thiamine diphosphate as cofactor.

It catalyses the reaction D-glyceraldehyde 3-phosphate + pyruvate + H(+) = 1-deoxy-D-xylulose 5-phosphate + CO2. The protein operates within metabolic intermediate biosynthesis; 1-deoxy-D-xylulose 5-phosphate biosynthesis; 1-deoxy-D-xylulose 5-phosphate from D-glyceraldehyde 3-phosphate and pyruvate: step 1/1. Catalyzes the acyloin condensation reaction between C atoms 2 and 3 of pyruvate and glyceraldehyde 3-phosphate to yield 1-deoxy-D-xylulose-5-phosphate (DXP). The sequence is that of 1-deoxy-D-xylulose-5-phosphate synthase from Aquifex aeolicus (strain VF5).